The primary structure comprises 712 residues: Transferrin-binding protein B (712 aa).

The N-terminal stretch at 1–20 (MNNPLVNQAAMVLPVFLLSA) is a signal peptide. The N-palmitoyl cysteine moiety is linked to residue Cys-21. Cys-21 carries the S-diacylglycerol cysteine lipid modification. The tract at residues 59-196 (GGYGFAMRLK…YHGKEPSRQL (138 aa)) is N-terminal handle domain. Disordered regions lie at residues 78 to 104 (EDEVKLDESDWEATGLPDEPKELPKRQ), 123 to 144 (PYLKPSNHQNGNTGNGINQPKN), 223 to 256 (IIQPSKSQGDRYSGFSGDDGEEYSNKNKSTLTDG), 309 to 338 (NGKATATDKPQQNSETKEHPFVSDSSSLSG), 364 to 398 (SAKTKDKPANGNTAAASGGTDAAASNGAAGTSSEN), 442 to 495 (ASES…GDTN), and 689 to 712 (NATNASGNSSATVVFGAKRQQPVR). Over residues 95–104 (DEPKELPKRQ) the composition is skewed to basic and acidic residues. Positions 128-144 (SNHQNGNTGNGINQPKN) are enriched in polar residues. Residues 197 to 367 (PASGKITYKG…KVAVVGSAKT (171 aa)) form an N-terminal beta barrel domain region. 2 stretches are compositionally biased toward low complexity: residues 372 to 398 (ANGNTAAASGGTDAAASNGAAGTSSEN) and 446 to 459 (GNNQANQGTNGGTA). A C-terminal handle domain region spans residues 389–555 (NGAAGTSSEN…SMFLQGERTD (167 aa)). Residues 462–475 (RKFDHTPESDKKDA) are compositionally biased toward basic and acidic residues. 2 stretches are compositionally biased toward polar residues: residues 477-495 (AGTQTNGAQTASNTAGDTN) and 689-700 (NATNASGNSSAT). Residues 556-712 (EKEIPSEQNI…FGAKRQQPVR (157 aa)) are C-terminal beta barrel domain.

It belongs to the TbpB family. Isotype II subfamily. Binds only human holo-transferrin (TF), via the TF C-terminus. Forms a large complex with TF and TbpA. Interacts via its C-terminal domain with Slam1.

Its subcellular location is the cell outer membrane. It localises to the cell surface. Neisseria acquires iron by extracting it from serum transferrin (TF) in its human host. Acts as a TF receptor and is required for TF utilization. Involved in the initial capture of TF. Helps select only those TF molecules that can be used as an iron source and concentrates them on the cell surface, maintaining the iron-loaded status of the TF C-terminal lobe until its delivery to TbpA. This is Transferrin-binding protein B from Neisseria meningitidis serogroup B (strain ATCC BAA-335 / MC58).